We begin with the raw amino-acid sequence, 297 residues long: Elongation factor Ts (297 aa).

The tract at residues 82–85 is involved in Mg(2+) ion dislocation from EF-Tu; it reads TDFV. The segment covering 223–265 has biased composition (low complexity); it reads AQTAAAAETAPPEVSEPEPAAAVTAEEPTPEPVAAAEQPAEPV. Residues 223-297 form a disordered region; that stretch reads AQTAAAAETA…GKSRSNKKKK (75 aa). Residues 286 to 297 show a composition bias toward basic residues; that stretch reads SGGKSRSNKKKK.

It belongs to the EF-Ts family.

The protein resides in the cytoplasm. Associates with the EF-Tu.GDP complex and induces the exchange of GDP to GTP. It remains bound to the aminoacyl-tRNA.EF-Tu.GTP complex up to the GTP hydrolysis stage on the ribosome. This chain is Elongation factor Ts, found in Thermosynechococcus vestitus (strain NIES-2133 / IAM M-273 / BP-1).